A 267-amino-acid polypeptide reads, in one-letter code: 3-methyl-2-oxobutanoate hydroxymethyltransferase (267 aa).

Mg(2+)-binding residues include D45 and D84. 3-methyl-2-oxobutanoate contacts are provided by residues 45–46 (DS), D84, and K113. Position 115 (E115) interacts with Mg(2+). E182 functions as the Proton acceptor in the catalytic mechanism.

Belongs to the PanB family. As to quaternary structure, homodecamer; pentamer of dimers. Requires Mg(2+) as cofactor.

It localises to the cytoplasm. It carries out the reaction 3-methyl-2-oxobutanoate + (6R)-5,10-methylene-5,6,7,8-tetrahydrofolate + H2O = 2-dehydropantoate + (6S)-5,6,7,8-tetrahydrofolate. It functions in the pathway cofactor biosynthesis; coenzyme A biosynthesis. In terms of biological role, catalyzes the reversible reaction in which hydroxymethyl group from 5,10-methylenetetrahydrofolate is transferred onto alpha-ketoisovalerate to form ketopantoate. This Saccharolobus solfataricus (strain ATCC 35092 / DSM 1617 / JCM 11322 / P2) (Sulfolobus solfataricus) protein is 3-methyl-2-oxobutanoate hydroxymethyltransferase.